A 330-amino-acid chain; its full sequence is Probable NAD(P)H-dependent D-xylose reductase xyl1 (330 aa).

The active-site Proton donor is tyrosine 50. Histidine 112 serves as a coordination point for substrate. Residues 166 to 167 (SN), 215 to 224 (SSFGPLSFLE), and 271 to 281 (KSNNPTRLAQN) contribute to the NAD(+) site.

The protein belongs to the aldo/keto reductase family.

It catalyses the reaction xylitol + NAD(+) = D-xylose + NADH + H(+). The enzyme catalyses xylitol + NADP(+) = D-xylose + NADPH + H(+). The protein operates within carbohydrate metabolism; D-xylose degradation. Functionally, catalyzes the initial reaction in the xylose utilization pathway by reducing D-xylose into xylitol. Xylose is a major component of hemicelluloses such as xylan. Most fungi utilize D-xylose via three enzymatic reactions, xylose reductase (XR), xylitol dehydrogenase (XDH), and xylulokinase, to form xylulose 5-phosphate, which enters pentose phosphate pathway. This is Probable NAD(P)H-dependent D-xylose reductase xyl1 (xyl1) from Aspergillus clavatus (strain ATCC 1007 / CBS 513.65 / DSM 816 / NCTC 3887 / NRRL 1 / QM 1276 / 107).